The following is a 246-amino-acid chain: MNNVKDKVVVITGASSGIGEETVNLLSENGAKLVLGARRLDRLEKIQQKVGHDSVSIKKTDVTKPDEVNALIETAYNDFGRIDVLINNAGLMPQSFLEKNKQDEWNQMIDVNIKGVLYGIGAVLPYMRKQKSGHIINLASVAGHVVFPGSAVYCGTKYAVRAITEGLRQEEAIVGSNIRTTILSPGAVSTELTDHISDKDMKQDIDELYKNAIKPDAIARAINYAINEPEESSVNEFIIRPSSQSL.

Residue 10–34 (VITGASSGIGEETVNLLSENGAKLV) coordinates NADP(+). S140 lines the substrate pocket. Y153 acts as the Proton acceptor in catalysis.

Belongs to the short-chain dehydrogenases/reductases (SDR) family.

This is an uncharacterized protein from Staphylococcus saprophyticus subsp. saprophyticus (strain ATCC 15305 / DSM 20229 / NCIMB 8711 / NCTC 7292 / S-41).